Reading from the N-terminus, the 77-residue chain is U8-lycotoxin-Ls1d (77 aa).

An N-terminal signal peptide occupies residues 1 to 20 (MKLIIFTGLVLFAIVSLIEA). A propeptide spanning residues 21 to 26 (QAENEK) is cleaved from the precursor.

It belongs to the neurotoxin 19 (CSTX) family. 08 (U8-Lctx) subfamily. In terms of processing, contains 4 disulfide bonds. As to expression, expressed by the venom gland.

It localises to the secreted. The polypeptide is U8-lycotoxin-Ls1d (Lycosa singoriensis (Wolf spider)).